Consider the following 577-residue polypeptide: PTS system lactose-specific EIICB component (577 aa).

One can recognise a PTS EIIC type-3 domain in the interval 4–405 (VFDKLKPVFE…VLDVAIYFPF (402 aa)). 9 helical membrane-spanning segments follow: residues 27–47 (GFIACMPIIIFSSIFMMVAYV), 63–83 (LMVAYNYSMGLLALFVAGTTA), 100–120 (INPVAVIVASEISFVILSILP), 133–153 (QGLICAYIVGLIVPNIYYVCI), 176–196 (LIPMGLSVTAFWLFGVGFKAA), 219–239 (YLGLALIAGAMAFFWFCGVQG), 280–300 (VMNFGGTGATLVVPFIMLFAA), 326–346 (FGMPIIMNPMLFIPFLATPIV), and 386–406 (LAFVFVLLTLVLDVAIYFPFI). Residues 476–577 (EVDVLVLCAG…MALDFVESNL (102 aa)) enclose the PTS EIIB type-3 domain. The Phosphocysteine intermediate; for EIIB activity role is filled by cysteine 483. At cysteine 483 the chain carries Phosphocysteine; by EIIA.

The protein localises to the cell membrane. The enzyme catalyses lactose(out) + N(pros)-phospho-L-histidyl-[protein] = lactose 6-phosphate(in) + L-histidyl-[protein]. The phosphoenolpyruvate-dependent sugar phosphotransferase system (sugar PTS), a major carbohydrate active transport system, catalyzes the phosphorylation of incoming sugar substrates concomitantly with their translocation across the cell membrane. The enzyme II LacEF PTS system is involved in lactose transport. This chain is PTS system lactose-specific EIICB component, found in Lacticaseibacillus casei (Lactobacillus casei).